Here is a 450-residue protein sequence, read N- to C-terminus: Divalent metal cation transporter MntH (450 aa).

Transmembrane regions (helical) follow at residues 34-54 (LSFL…GNWI), 59-81 (GGAQ…AMLL), 108-128 (IAII…IAEV), 141-161 (IPLI…LFIM), 170-190 (AIVG…VYIS), 212-232 (GILY…NLYL), 263-283 (IQLS…ASLF), 305-325 (PVLG…ALLA), 361-381 (SLAV…AAKI), 383-403 (QLLV…LIPL), and 422-442 (VNII…YLIV).

This sequence belongs to the NRAMP family.

The protein resides in the cell membrane. Its function is as follows. H(+)-stimulated, divalent metal cation uptake system. In Staphylococcus aureus (strain MRSA252), this protein is Divalent metal cation transporter MntH.